Here is a 588-residue protein sequence, read N- to C-terminus: MDKTRQTELVRWLKQHSTSAKRWLRISMLLGVVSGLLIIAQAWFLAVILQALIMEHTPREQLLTPFILLLAVFVLRALLTVIRERVGFRCGQVVRQEVRNMVLNKLQALGPVWVKGKPAGSWATIVLEQIEDMQEYYSRYLPQMYLAGIIPIMILIAIFPFNWAAALILFATAPLIPIFMALVGLGAADANRRNFVALGRLSGSFLDRLRGLDTLRLFFREKAEVQQIRESTEDFRSRTMEVLRMAFLSSGVLEFFASISIAIVAVYFGFSYLGELNFGSYGLPVTMFAGFLALILSPEFFQPLRDLGTYYHAKAQAVGAAESLVTLLESDGEQKTETGDKTPQDKPIQIEANKLEIYSHDGQRLVGPLDFTIEPQQRIAVFGQSGAGKSSLLNLLLGFLPYKGSIKINGDELKELCPDKWRALIGWVGQNPHLPEQTLIENICLGKPTASEAEIQQAIDDAYVSEFLPMLPDGLNTRLGDYAARLSVGQAQRVAVARTLLKPSRILLLDEPAASLDAHSEKRVMHTLNQLAQQQTTIMVTHLLEETVNYDQIWVMANGQIIQRGHYAQLSQSEGPFARLLAHRSEEL.

One can recognise an ABC transmembrane type-1 domain in the interval 24-316 (LRISMLLGVV…LGTYYHAKAQ (293 aa)). A run of 6 helical transmembrane segments spans residues 29–49 (LLGVVSGLLIIAQAWFLAVIL), 62–82 (LLTPFILLLAVFVLRALLTVI), 149–169 (IIPIMILIAIFPFNWAAALIL), 170–190 (FATAPLIPIFMALVGLGAADA), 250–270 (SGVLEFFASISIAIVAVYFGF), and 276–296 (LNFGSYGLPVTMFAGFLALIL). Residues 350-583 (IEANKLEIYS…EGPFARLLAH (234 aa)) form the ABC transporter domain. 383 to 390 (GQSGAGKS) contributes to the ATP binding site.

The protein belongs to the ABC transporter superfamily.

It localises to the cell inner membrane. Functionally, somehow involved in the cytochrome D branch of aerobic respiration. Seems to be a component of a transport system. The chain is Transport ATP-binding protein AarD (aarD) from Providencia stuartii.